The following is a 470-amino-acid chain: Neuraminidase (470 aa).

The Intravirion segment spans residues methionine 1 to serine 14. Positions glycine 11 to threonine 32 are involved in apical transport and lipid raft association. Residues leucine 15–valine 35 traverse the membrane as a helical segment. A hypervariable stalk region region spans residues threonine 32 to threonine 86. The Virion surface segment spans residues leucine 36–methionine 470. 3 N-linked (GlcNAc...) asparagine; by host glycosylation sites follow: asparagine 46, asparagine 54, and asparagine 84. The head of neuraminidase stretch occupies residues isoleucine 89–methionine 470. Intrachain disulfides connect cysteine 90/cysteine 417, cysteine 122/cysteine 127, cysteine 182/cysteine 229, cysteine 231/cysteine 236, cysteine 277/cysteine 290, cysteine 279/cysteine 288, cysteine 316/cysteine 335, and cysteine 421/cysteine 446. A substrate-binding site is contributed by arginine 116. Asparagine 144 carries N-linked (GlcNAc...) asparagine; by host glycosylation. The active-site Proton donor/acceptor is the aspartate 149. Position 150 (arginine 150) interacts with substrate. Glutamate 275–glutamate 276 is a binding site for substrate. Position 291 (arginine 291) interacts with substrate. 3 residues coordinate Ca(2+): aspartate 292, glycine 296, and aspartate 322. Arginine 368 is a binding site for substrate. N-linked (GlcNAc...) asparagine; by host glycosylation is present at asparagine 398. The active-site Nucleophile is the tyrosine 402.

The protein belongs to the glycosyl hydrolase 34 family. As to quaternary structure, homotetramer. Requires Ca(2+) as cofactor. In terms of processing, N-glycosylated.

Its subcellular location is the virion membrane. The protein resides in the host apical cell membrane. It catalyses the reaction Hydrolysis of alpha-(2-&gt;3)-, alpha-(2-&gt;6)-, alpha-(2-&gt;8)- glycosidic linkages of terminal sialic acid residues in oligosaccharides, glycoproteins, glycolipids, colominic acid and synthetic substrates.. Its activity is regulated as follows. Inhibited by the neuraminidase inhibitors zanamivir (Relenza) and oseltamivir (Tamiflu). These drugs interfere with the release of progeny virus from infected cells and are effective against all influenza strains. Resistance to neuraminidase inhibitors is quite rare. Its function is as follows. Catalyzes the removal of terminal sialic acid residues from viral and cellular glycoconjugates. Cleaves off the terminal sialic acids on the glycosylated HA during virus budding to facilitate virus release. Additionally helps virus spread through the circulation by further removing sialic acids from the cell surface. These cleavages prevent self-aggregation and ensure the efficient spread of the progeny virus from cell to cell. Otherwise, infection would be limited to one round of replication. Described as a receptor-destroying enzyme because it cleaves a terminal sialic acid from the cellular receptors. May facilitate viral invasion of the upper airways by cleaving the sialic acid moieties on the mucin of the airway epithelial cells. Likely to plays a role in the budding process through its association with lipid rafts during intracellular transport. May additionally display a raft-association independent effect on budding. Plays a role in the determination of host range restriction on replication and virulence. Sialidase activity in late endosome/lysosome traffic seems to enhance virus replication. The chain is Neuraminidase from Influenza A virus (strain A/Duck/Ukraine/1/1963 H3N8).